Reading from the N-terminus, the 487-residue chain is N-succinylglutamate 5-semialdehyde dehydrogenase (487 aa).

221–226 (GSSDTG) is an NAD(+) binding site. Active-site residues include Glu244 and Cys278.

This sequence belongs to the aldehyde dehydrogenase family. AstD subfamily.

The catalysed reaction is N-succinyl-L-glutamate 5-semialdehyde + NAD(+) + H2O = N-succinyl-L-glutamate + NADH + 2 H(+). It participates in amino-acid degradation; L-arginine degradation via AST pathway; L-glutamate and succinate from L-arginine: step 4/5. Functionally, catalyzes the NAD-dependent reduction of succinylglutamate semialdehyde into succinylglutamate. The sequence is that of N-succinylglutamate 5-semialdehyde dehydrogenase from Burkholderia vietnamiensis (strain G4 / LMG 22486) (Burkholderia cepacia (strain R1808)).